The sequence spans 517 residues: Aldehyde dehydrogenase, mitochondrial (517 aa).

The N-terminal 17 residues, 1 to 17 (MLRAAARFGPRLGRRLL), are a transit peptide targeting the mitochondrion. The SIFI-degron signature appears at 9 to 24 (GPRLGRRLLSAAATQA). Residues Lys52, Lys73, Lys78, and Lys159 each carry the N6-acetyllysine modification. Residue 262–267 (GSTEIG) coordinates NAD(+). Residue Glu285 is the Proton acceptor of the active site. Cys319 acts as the Nucleophile in catalysis. An N6-acetyllysine mark is found at Lys368, Lys383, Lys426, Lys428, and Lys451.

Belongs to the aldehyde dehydrogenase family. In terms of assembly, homotetramer. In response to mitochondrial stress, the precursor protein is ubiquitinated by the SIFI complex in the cytoplasm before mitochondrial import, leading to its degradation. Within the SIFI complex, UBR4 initiates ubiquitin chain that are further elongated or branched by KCMF1.

Its subcellular location is the mitochondrion matrix. It catalyses the reaction an aldehyde + NAD(+) + H2O = a carboxylate + NADH + 2 H(+). The protein operates within alcohol metabolism; ethanol degradation; acetate from ethanol: step 2/2. Its function is as follows. Required for clearance of cellular formaldehyde, a cytotoxic and carcinogenic metabolite that induces DNA damage. The sequence is that of Aldehyde dehydrogenase, mitochondrial (ALDH2) from Homo sapiens (Human).